The sequence spans 146 residues: Protein U1 (146 aa).

This sequence belongs to the nanovirus U1 protein family.

This is Protein U1 (DNA-U1) from Subterranean clover stunt virus (strain F) (SCSV).